Consider the following 425-residue polypeptide: Histone-binding protein RBBP7 (425 aa).

Position 2 is an N-acetylalanine (A2). Phosphoserine is present on S3. K4 is modified (N6-acetyllysine; alternate). K4 participates in a covalent cross-link: Glycyl lysine isopeptide (Lys-Gly) (interchain with G-Cter in SUMO2); alternate. K4 is covalently cross-linked (Glycyl lysine isopeptide (Lys-Gly) (interchain with G-Cter in ubiquitin); alternate). T10 carries the post-translational modification Phosphothreonine. Phosphoserine is present on residues E13 and S95. WD repeat units lie at residues 47–122 (QWLP…KINH), 128–173 (RARY…LRLR), 181–217 (GLSWNSNLSGHLLSASDDHTVCLWDINAGPKEGKIVD), 228–269 (VVED…HLVD), 275–312 (VNCLSFNPYSEFILATGSADKTVALWDLRNLKLKLHTF), 318–369 (EIFQ…LFIH), and 376–403 (ISDFSWNPNEPWVICSVSEDNIMQIWQM). K101 participates in a covalent cross-link: Glycyl lysine isopeptide (Lys-Gly) (interchain with G-Cter in SUMO2). The residue at position 119 (K119) is an N6-acetyllysine. K155 participates in a covalent cross-link: Glycyl lysine isopeptide (Lys-Gly) (interchain with G-Cter in SUMO2). Residue K159 is modified to N6-acetyllysine; alternate. K159 is covalently cross-linked (Glycyl lysine isopeptide (Lys-Gly) (interchain with G-Cter in SUMO2); alternate). S354 is subject to Phosphoserine.

Belongs to the WD repeat RBAP46/RBAP48/MSI1 family. Binds directly to helix 1 of the histone fold of histone H4, a region that is not accessible when H4 is in chromatin. Subunit of the type B histone acetyltransferase (HAT) complex, composed of RBBP7 and HAT1. Subunit of the core histone deacetylase (HDAC) complex, which is composed of HDAC1, HDAC2, RBBP4 and RBBP7. The core HDAC complex associates with SIN3A, ARID4B/SAP180, SAP18, SAP30, SAP130, SUDS3/SAP45 and possibly ARID4A/RBP1 and ING1 to form the SIN3 HDAC complex. Component of the nucleosome remodeling and deacetylase (NuRD) repressor complex, composed of core proteins MTA1, MTA2, MTA3, RBBP4, RBBP7, HDAC1, HDAC2, MBD2, MBD3, and peripherally associated proteins CDK2AP1, CDK2AP2, GATAD2A, GATAD2B, CHD3, CHD4 and CHD5. The exact stoichiometry of the NuRD complex is unknown, and some subunits such as MBD2 and MBD3, GATAD2A and GATAD2B, and CHD3, CHD4 and CHD5 define mutually exclusive NuRD complexes. The NuRD complex may interact with MBD3L1. The NuRD complex may interact with MBD3L2. Subunit of the PRC2/EED-EZH2 complex, which is composed of at least EED, EZH2, RBBP4, RBBP7 and SUZ12. The PRC2/EED-EZH2 complex may also associate with HDAC1. Component of the NURF-1 ISWI chromatin remodeling complex (also called the nucleosome-remodeling factor (NURF) complex) at least composed of SMARCA1 (isoform 2), BPTF, RBBP4 and RBBP7. Within the complex interacts with isoform 2 of SMARCA1. Component of the BPFT-SMARCA1 complex at least composed of SMARCA1 (isoform 1), BPFT, RBBP4 and RBBP7; the complex is catalytically inactive and does not remodel chromatin. Within the complex interacts with isoform 1 of SMARCA1. Interacts with BRCA1. Interacts with CDK2AP1. Interacts with CENPA. Interacts with CHD3. Interacts with CHD4. Interacts with CREBBP, and this interaction may be enhanced by the binding of phosphorylated CREB1 to CREBBP. Interacts with HDAC7. Interacts with MTA1. Interacts with PWWP2B. Interacts with RB1 (via viral protein-binding domain). Interacts with SUV39H1.

It is found in the nucleus. In terms of biological role, core histone-binding subunit that may target chromatin remodeling factors, histone acetyltransferases and histone deacetylases to their histone substrates in a manner that is regulated by nucleosomal DNA. Component of several complexes which regulate chromatin metabolism. These include the type B histone acetyltransferase (HAT) complex, which is required for chromatin assembly following DNA replication; the core histone deacetylase (HDAC) complex, which promotes histone deacetylation and consequent transcriptional repression; the nucleosome remodeling and histone deacetylase complex (the NuRD complex), which promotes transcriptional repression by histone deacetylation and nucleosome remodeling; and the PRC2/EED-EZH2 complex, which promotes repression of homeotic genes during development; and the NURF (nucleosome remodeling factor) complex. The sequence is that of Histone-binding protein RBBP7 (RBBP7) from Homo sapiens (Human).